A 430-amino-acid polypeptide reads, in one-letter code: Adenylosuccinate synthetase (430 aa).

Residues 12 to 18 and 40 to 42 each bind GTP; these read GDEGKGK and GHT. Aspartate 13 acts as the Proton acceptor in catalysis. Residues aspartate 13 and glycine 40 each coordinate Mg(2+). IMP contacts are provided by residues 13–16, 38–41, threonine 128, arginine 142, glutamine 223, threonine 238, and arginine 302; these read DEGK and NAGH. Histidine 41 acts as the Proton donor in catalysis. A substrate-binding site is contributed by 298 to 304; it reads VNTGRKR. Residues arginine 304, 330–332, and 412–414 contribute to the GTP site; these read KLD and GVG.

It belongs to the adenylosuccinate synthetase family. In terms of assembly, homodimer. The cofactor is Mg(2+).

It localises to the cytoplasm. It catalyses the reaction IMP + L-aspartate + GTP = N(6)-(1,2-dicarboxyethyl)-AMP + GDP + phosphate + 2 H(+). Its pathway is purine metabolism; AMP biosynthesis via de novo pathway; AMP from IMP: step 1/2. Its function is as follows. Plays an important role in the de novo pathway of purine nucleotide biosynthesis. Catalyzes the first committed step in the biosynthesis of AMP from IMP. In Corynebacterium aurimucosum (strain ATCC 700975 / DSM 44827 / CIP 107346 / CN-1) (Corynebacterium nigricans), this protein is Adenylosuccinate synthetase.